Here is a 408-residue protein sequence, read N- to C-terminus: Aminoacylase-1B (408 aa).

His-80 provides a ligand contact to Zn(2+). Residue Asp-82 is part of the active site. A Zn(2+)-binding site is contributed by Asp-113. Glu-147 serves as the catalytic Proton acceptor. Glu-148, Glu-175, and His-373 together coordinate Zn(2+). The residue at position 408 (Ser-408) is a Phosphoserine.

It belongs to the peptidase M20A family. As to quaternary structure, homodimer. It depends on Zn(2+) as a cofactor. In terms of tissue distribution, expressed in kidney.

It is found in the cytoplasm. It catalyses the reaction an N-acyl-L-amino acid + H2O = an L-alpha-amino acid + a carboxylate. The enzyme catalyses an N-acetyl-L-cysteine-S-conjugate + H2O = an S-substituted L-cysteine + acetate. Its function is as follows. Involved in the hydrolysis of N-acylated or N-acetylated amino acids (except L-aspartate). This chain is Aminoacylase-1B (Acy1b), found in Rattus norvegicus (Rat).